The sequence spans 47 residues: Zinc-finger protein TK0143 (47 aa).

The C2H2-type zinc finger occupies 18-41 (FRCPRCGMVFRSAKAYTRHVNKAH). Zn(2+) is bound by residues Cys-20, Cys-23, His-36, and His-41.

In terms of assembly, crystallized in association with 70S ribosomes. Requires Zn(2+) as cofactor.

This Thermococcus kodakarensis (strain ATCC BAA-918 / JCM 12380 / KOD1) (Pyrococcus kodakaraensis (strain KOD1)) protein is Zinc-finger protein TK0143.